The sequence spans 469 residues: Glutamate--tRNA ligase (469 aa).

A 'HIGH' region motif is present at residues 11–21; it reads PSPTGFIHLGN. The short motif at 243 to 247 is the 'KMSKS' region element; it reads KMSKR. Lysine 246 contacts ATP.

Belongs to the class-I aminoacyl-tRNA synthetase family. Glutamate--tRNA ligase type 1 subfamily. As to quaternary structure, monomer.

The protein resides in the cytoplasm. It catalyses the reaction tRNA(Glu) + L-glutamate + ATP = L-glutamyl-tRNA(Glu) + AMP + diphosphate. Functionally, catalyzes the attachment of glutamate to tRNA(Glu) in a two-step reaction: glutamate is first activated by ATP to form Glu-AMP and then transferred to the acceptor end of tRNA(Glu). The sequence is that of Glutamate--tRNA ligase from Burkholderia cenocepacia (strain ATCC BAA-245 / DSM 16553 / LMG 16656 / NCTC 13227 / J2315 / CF5610) (Burkholderia cepacia (strain J2315)).